Reading from the N-terminus, the 268-residue chain is 4-hydroxy-tetrahydrodipicolinate reductase (268 aa).

NAD(+)-binding positions include Gly-10–Met-15 and Asp-36. An NADP(+)-binding site is contributed by Arg-37. NAD(+)-binding positions include Gly-99–Thr-101 and Ser-123–Met-126. His-156 serves as the catalytic Proton donor/acceptor. His-157 contacts (S)-2,3,4,5-tetrahydrodipicolinate. Lys-160 (proton donor) is an active-site residue. (S)-2,3,4,5-tetrahydrodipicolinate is bound at residue Gly-166–Thr-167.

This sequence belongs to the DapB family.

Its subcellular location is the cytoplasm. It catalyses the reaction (S)-2,3,4,5-tetrahydrodipicolinate + NAD(+) + H2O = (2S,4S)-4-hydroxy-2,3,4,5-tetrahydrodipicolinate + NADH + H(+). It carries out the reaction (S)-2,3,4,5-tetrahydrodipicolinate + NADP(+) + H2O = (2S,4S)-4-hydroxy-2,3,4,5-tetrahydrodipicolinate + NADPH + H(+). The protein operates within amino-acid biosynthesis; L-lysine biosynthesis via DAP pathway; (S)-tetrahydrodipicolinate from L-aspartate: step 4/4. Functionally, catalyzes the conversion of 4-hydroxy-tetrahydrodipicolinate (HTPA) to tetrahydrodipicolinate. In Burkholderia mallei (strain NCTC 10247), this protein is 4-hydroxy-tetrahydrodipicolinate reductase.